Here is a 218-residue protein sequence, read N- to C-terminus: Protein N-lysine methyltransferase METTL21A (218 aa).

S-adenosyl-L-methionine-binding positions include Trp47, 73-75 (GAG), Asp94, Trp125, and Ala143.

It belongs to the methyltransferase superfamily. METTL21 family.

It localises to the cytoplasm. The enzyme catalyses L-lysyl-[protein] + 3 S-adenosyl-L-methionine = N(6),N(6),N(6)-trimethyl-L-lysyl-[protein] + 3 S-adenosyl-L-homocysteine + 3 H(+). Functionally, protein-lysine methyltransferase that selectively trimethylates residues in heat shock protein 70 (HSP70) family members. This Danio rerio (Zebrafish) protein is Protein N-lysine methyltransferase METTL21A (mettl21a).